The chain runs to 376 residues: UPF0754 membrane protein SE_1527 (376 aa).

The next 2 helical transmembrane spans lie at 4 to 24 (ILLVVFMIILGAIIGGVTNMI) and 356 to 376 (TLGFILGGIIGFFQGVIAIFV).

The protein belongs to the UPF0754 family.

It is found in the cell membrane. This is UPF0754 membrane protein SE_1527 from Staphylococcus epidermidis (strain ATCC 12228 / FDA PCI 1200).